The sequence spans 137 residues: Interferon-induced transmembrane protein 3 (137 aa).

Topologically, residues 1 to 57 (MNHTSQAFVNAATGGQPPNYERIKEEYEVSELGAPHGSASVRTTVINMPREVSVPDH) are cytoplasmic. Y20 carries the phosphotyrosine modification. A Glycyl lysine isopeptide (Lys-Gly) (interchain with G-Cter in ubiquitin) cross-link involves residue K24. At Y27 the chain carries Phosphotyrosine. Positions 58 to 78 (VVWSLFNTLFMNFCCLGFIAY) form an intramembrane region, helical. The segment at 60 to 93 (WSLFNTLFMNFCCLGFIAYAYSVKSRDRKMVGDM) is interaction with SPP1. Residues C71 and C72 are each lipidated (S-palmitoyl cysteine). The Cytoplasmic segment spans residues 79–109 (AYSVKSRDRKMVGDMTGAQAYASTAKCLNIS). Glycyl lysine isopeptide (Lys-Gly) (interchain with G-Cter in ubiquitin) cross-links involve residues K83, K88, and K104. Residue C105 is the site of S-palmitoyl cysteine attachment. The segment at 108–133 (ISSLVLSILMVIITIVTVVIIALNAP) is interaction with VAPA. Residues 110-130 (SLVLSILMVIITIVTVVIIAL) traverse the membrane as a helical segment. Over 131–137 (NAPRLQT) the chain is Extracellular.

It belongs to the CD225/Dispanin family. As to quaternary structure, interacts with ATP6V0B. Interacts with CD81. Interacts with SPP1; the interaction reduces OPN expression. Interacts with BRI3. In terms of processing, polyubiquitinated with both 'Lys-48' and 'Lys-63' linkages. Ubiquitination negatively regulates antiviral activity. Lys-24 is the most prevalent ubiquitination site. Phosphorylation at Tyr-20 is required for endosomal and lysosomal location.

The protein resides in the cell membrane. It is found in the late endosome membrane. The protein localises to the early endosome membrane. It localises to the lysosome membrane. Its subcellular location is the cytoplasm. The protein resides in the perinuclear region. IFN-induced antiviral protein which disrupts intracellular cholesterol homeostasis. Inhibits the entry of viruses to the host cell cytoplasm by preventing viral fusion with cholesterol depleted endosomes. May inactivate new enveloped viruses which buds out of the infected cell, by letting them go out with a cholesterol depleted membrane. Active against multiple viruses. Plays a critical role in the structural stability and function of vacuolar ATPase (v-ATPase). Establishes physical contact with the v-ATPase of endosomes which is critical for proper clathrin localization and is also required for the function of the v-ATPase to lower the pH in phagocytic endosomes thus establishing an antiviral state. This Rattus norvegicus (Rat) protein is Interferon-induced transmembrane protein 3.